We begin with the raw amino-acid sequence, 107 residues long: UPF0473 protein Ldb1604 (107 aa).

It belongs to the UPF0473 family.

The polypeptide is UPF0473 protein Ldb1604 (Lactobacillus delbrueckii subsp. bulgaricus (strain ATCC 11842 / DSM 20081 / BCRC 10696 / JCM 1002 / NBRC 13953 / NCIMB 11778 / NCTC 12712 / WDCM 00102 / Lb 14)).